The chain runs to 106 residues: MKKITTNEQFNELIQSDKEIIVKFYADWCPDCTRMNMFIGDILEEYNQNDWYELNKDELPDLAEKYQVMGIPSLLIFKNGEKTAHLHSANAKTPEEVTEFLSEHIS.

The Thioredoxin domain maps to methionine 1 to serine 106. Residues cysteine 29 and cysteine 32 are joined by a disulfide bond.

This sequence belongs to the thioredoxin family.

Functionally, participates in various redox reactions through the reversible oxidation of its active center dithiol to a disulfide and catalyzes dithiol-disulfide exchange reactions. This chain is Thioredoxin-like protein YdbP (ydbP), found in Bacillus subtilis (strain 168).